Consider the following 343-residue polypeptide: MLSYPGELQGCRVILYLVGHHLYLIPTTISMCGCPEEGAYMRRLWGYISIITATIFFGISATLDKIMLSSMHPVTIGAYTYIIAGIFLFFIRETPLREHVLNAINRKGESEARIKRNDYLILLLTALLSTVIAPLLFLTGLGDTTAVNASLILNVEVLFIILLGYLIFRETLQLKDFLGIVLIILGAVYLLTEGDFSTILRNVAVTGNFLVMAAAFFWSLDTVLSKFLSRKRDLIFISGVKSSVGGFVLLIIMLILGINTELPLEMLPYALGVSVFSIGCSFILIYIAIREIGASMVGALFPLSSLFGAIFAFIILREPFSIMQGISGIVMLTGVFILYWNGK.

The next 11 helical transmembrane spans lie at 13 to 33 (VILY…SMCG), 44 to 64 (LWGY…ATLD), 71 to 91 (MHPV…LFFI), 121 to 141 (ILLL…LTGL), 148 to 168 (NASL…YLIF), 177 to 197 (FLGI…GDFS), 203 to 223 (VAVT…LDTV), 244 to 264 (VGGF…ELPL), 269 to 289 (YALG…YIAI), 296 to 316 (MVGA…FIIL), and 320 to 340 (FSIM…ILYW). EamA domains lie at 55–192 (IFFG…YLLT) and 216–340 (FFWS…ILYW).

This sequence belongs to the EamA transporter family.

The protein resides in the cell membrane. This is an uncharacterized protein from Methanothermobacter thermautotrophicus (strain ATCC 29096 / DSM 1053 / JCM 10044 / NBRC 100330 / Delta H) (Methanobacterium thermoautotrophicum).